A 328-amino-acid polypeptide reads, in one-letter code: Formimidoylglutamase (328 aa).

Mn(2+)-binding residues include His133, Asp159, His161, Asp163, Asp253, and Asp255.

Belongs to the arginase family. The cofactor is Mn(2+).

It carries out the reaction N-formimidoyl-L-glutamate + H2O = formamide + L-glutamate. The protein operates within amino-acid degradation; L-histidine degradation into L-glutamate; L-glutamate from N-formimidoyl-L-glutamate (hydrolase route): step 1/1. Catalyzes the conversion of N-formimidoyl-L-glutamate to L-glutamate and formamide. In Streptococcus pyogenes serotype M28 (strain MGAS6180), this protein is Formimidoylglutamase.